The following is a 316-amino-acid chain: tRNA dimethylallyltransferase (316 aa).

13 to 20 contacts ATP; that stretch reads GPTASGKT. 15-20 lines the substrate pocket; it reads TASGKT. Interaction with substrate tRNA regions lie at residues 38-41, 162-166, 243-248, and 276-283; these read DSAL, QRINR, RCVGYR, and KRQITWLR.

It belongs to the IPP transferase family. As to quaternary structure, monomer. Requires Mg(2+) as cofactor.

It carries out the reaction adenosine(37) in tRNA + dimethylallyl diphosphate = N(6)-dimethylallyladenosine(37) in tRNA + diphosphate. Catalyzes the transfer of a dimethylallyl group onto the adenine at position 37 in tRNAs that read codons beginning with uridine, leading to the formation of N6-(dimethylallyl)adenosine (i(6)A). In Pasteurella multocida (strain Pm70), this protein is tRNA dimethylallyltransferase.